We begin with the raw amino-acid sequence, 510 residues long: MKKNLHIIILALSIFINLLFIYIFISEVKPNLNLNLSFILTAAVIVVTYLLFKNKFSELMPVNYNNITETKEDTSHRKTNITFKDVAGLDEVIDELKVIIDFMTNTEKYNKMGAKIPKGILFYGPPGTGKTLLATALAGETNSTFISASGSEFVEKYVGVGASRIRALFAKAKKSAPSIIFIDEIDAVGTKRNTDNNSEKDQTLNQLLVEMDGFNSNEGIIVIGATNRIDMLDEALLRPGRFDRTIHIGAPNMKARLEILKVHTRNKPLDESVSLSELARKTHGMTGAHLAAMCNEAAILAVMKNKSKIGKEEFEEALERVIAGLKKKNPSVLEKERNIAAYHEAGHALIGKILNVNTIEKISIVPRGEALGYVLNFPKEDAFLLTKTELKNKITMLLGGRASEEIIFNEISTGAENDLKEATKIAYQMVCNYGMSELGNRVFDLHMLKSTEIVDKEIDKIINSCYILAKKILLENKHKVIAIAEKLLEKESITKEELETLWEEENTLCV.

At 1–4 the chain is on the cytoplasmic side; that stretch reads MKKN. The helical transmembrane segment at 5–25 threads the bilayer; the sequence is LHIIILALSIFINLLFIYIFI. Residues 26–31 are Extracellular-facing; the sequence is SEVKPN. Residues 32–52 form a helical membrane-spanning segment; the sequence is LNLNLSFILTAAVIVVTYLLF. Over 53-510 the chain is Cytoplasmic; that stretch reads KNKFSELMPV…LWEEENTLCV (458 aa). 124–131 lines the ATP pocket; it reads GPPGTGKT. His-343 lines the Zn(2+) pocket. Glu-344 is an active-site residue. 2 residues coordinate Zn(2+): His-347 and Asp-418.

It in the central section; belongs to the AAA ATPase family. In the C-terminal section; belongs to the peptidase M41 family. Homohexamer. Zn(2+) serves as cofactor.

It localises to the cell membrane. Functionally, acts as a processive, ATP-dependent zinc metallopeptidase for both cytoplasmic and membrane proteins. Plays a role in the quality control of integral membrane proteins. The sequence is that of ATP-dependent zinc metalloprotease FtsH 2 from Thermoanaerobacter sp. (strain X514).